The primary structure comprises 279 residues: Urease accessory protein UreD (279 aa).

Belongs to the UreD family. As to quaternary structure, ureD, UreF and UreG form a complex that acts as a GTP-hydrolysis-dependent molecular chaperone, activating the urease apoprotein by helping to assemble the nickel containing metallocenter of UreC. The UreE protein probably delivers the nickel.

Its subcellular location is the cytoplasm. In terms of biological role, required for maturation of urease via the functional incorporation of the urease nickel metallocenter. The protein is Urease accessory protein UreD of Streptococcus thermophilus (strain CNRZ 1066).